Reading from the N-terminus, the 698-residue chain is UvrABC system protein B (698 aa).

A Helicase ATP-binding domain is found at 28 to 414 (RRILAGERDV…SGGEFVEQVI (387 aa)). 41–48 (GATGTGKS) provides a ligand contact to ATP. The short motif at 94–117 (YYDYYQPEAYIAQTDTYIEKDSSI) is the Beta-hairpin element. Residues 432–598 (QIDDLIGEIR…PLRKKIADIL (167 aa)) form the Helicase C-terminal domain. The segment at 609–629 (DTVQVGGSGRNVSRGRRAQSE) is disordered. Residues 653-688 (ADLIKDLTAQMMAAASDLQFELAARFRDEIADLKKE) form the UVR domain.

It belongs to the UvrB family. In terms of assembly, forms a heterotetramer with UvrA during the search for lesions. Interacts with UvrC in an incision complex.

The protein resides in the cytoplasm. In terms of biological role, the UvrABC repair system catalyzes the recognition and processing of DNA lesions. A damage recognition complex composed of 2 UvrA and 2 UvrB subunits scans DNA for abnormalities. Upon binding of the UvrA(2)B(2) complex to a putative damaged site, the DNA wraps around one UvrB monomer. DNA wrap is dependent on ATP binding by UvrB and probably causes local melting of the DNA helix, facilitating insertion of UvrB beta-hairpin between the DNA strands. Then UvrB probes one DNA strand for the presence of a lesion. If a lesion is found the UvrA subunits dissociate and the UvrB-DNA preincision complex is formed. This complex is subsequently bound by UvrC and the second UvrB is released. If no lesion is found, the DNA wraps around the other UvrB subunit that will check the other stand for damage. The sequence is that of UvrABC system protein B from Mycobacterium leprae (strain TN).